Consider the following 298-residue polypeptide: Ketohexokinase (298 aa).

Beta-D-fructose-binding residues include D15, G41, N42, and N45. ATP-binding positions include R108, A226–G229, and G255–D258. Residue D258 participates in beta-D-fructose binding.

This sequence belongs to the carbohydrate kinase PfkB family. In terms of assembly, homodimer. As to expression, most abundant in liver, kidney, gut, spleen and pancreas. Low levels also found in adrenal, muscle, brain and eye.

The catalysed reaction is beta-D-fructose + ATP = beta-D-fructose 1-phosphate + ADP + H(+). The protein operates within carbohydrate metabolism; fructose metabolism. Requires potassium. Inhibition by ADP. Catalyzes the phosphorylation of the ketose sugar fructose to fructose-1-phosphate. This Homo sapiens (Human) protein is Ketohexokinase.